A 497-amino-acid polypeptide reads, in one-letter code: Signal recognition particle subunit SRP54 2 (497 aa).

The G-domain stretch occupies residues 1–295; it reads MVLAQLGGSI…DVKPFVSRLL (295 aa). GTP is bound by residues 108–115, 190–194, and 248–251; these read GLQGSGKT, DTSGR, and TKLD. The M-domain stretch occupies residues 296 to 497; that stretch reads GMGDLSGLMD…MLGGMGLGGD (202 aa).

It belongs to the GTP-binding SRP family. SRP54 subfamily. Component of a signal recognition particle (SRP) complex that consists of a 7SL RNA molecule of 300 nucleotides and six protein subunits: SRP72, SRP68, SRP54, SRP19, SRP14 and SRP9.

It is found in the cytoplasm. It localises to the endoplasmic reticulum. The catalysed reaction is GTP + H2O = GDP + phosphate + H(+). In terms of biological role, component of the signal recognition particle (SRP) complex, a ribonucleoprotein complex that mediates the cotranslational targeting of secretory and membrane proteins to the endoplasmic reticulum (ER). As part of the SRP complex, associates with the SRP receptor (SR) component SRPRA to target secretory proteins to the endoplasmic reticulum membrane. Binds to the signal sequence of presecretory proteins when they emerge from the ribosomes. Displays basal GTPase activity, and stimulates reciprocal GTPase activation of the SR subunit SRPRA. Forms a guanosine 5'-triphosphate (GTP)-dependent complex with the SR subunit SRPRA. SR compaction and GTPase mediated rearrangement of SR drive SRP-mediated cotranslational protein translocation into the ER. Requires the presence of SRP9/SRP14 and/or SRP19 to stably interact with RNA. The polypeptide is Signal recognition particle subunit SRP54 2 (SRP54-2) (Hordeum vulgare (Barley)).